The following is a 463-amino-acid chain: MSTGTVVQVIGAVVDVEFPQDAVPQVYDALKIVGEGPCNGLVLEVQQQLGGGVVRTIAMGSSDGLRRGLEVVNSGSPITVPVGTATLGRIMNVLGEPIDEAGPIGEEERYVIHRTAPSYEDQSSSTELLETGIKVIDLVCPFAKGGKVGLFGGAGVGKTVNMMELINNIAKAHSGLSVFAGVGERTREGNDFYYEMKDSGVLDKVAMVYGQMNEPPGNRLRVALSGLTMAEKFRDEGRDVLLFVDNIYRYTLAGTEVSALLGRMPSAVGYQPTLAEEMGVLQERITSTKTGSITSVQAVYVPADDLTDPSPATTFAHLDATVVLSRQIASLGIYPAVDPLDSTSRQLDPLVVGQEHYDVANGVQTVLQRYKELKDIIAILGMDELSDEDKTTVFRARKIERFLSQPFFVAEVFTGSPGKYVSLKDTIRGFKGILNGEFDHLPEQAFYMVGSIDEVIEKANKKK.

Residue 152–159 (GGAGVGKT) coordinates ATP.

It belongs to the ATPase alpha/beta chains family. As to quaternary structure, F-type ATPases have 2 components, CF(1) - the catalytic core - and CF(0) - the membrane proton channel. CF(1) has five subunits: alpha(3), beta(3), gamma(1), delta(1), epsilon(1). CF(0) has three main subunits: a(1), b(2) and c(9-12). The alpha and beta chains form an alternating ring which encloses part of the gamma chain. CF(1) is attached to CF(0) by a central stalk formed by the gamma and epsilon chains, while a peripheral stalk is formed by the delta and b chains.

Its subcellular location is the cell inner membrane. The enzyme catalyses ATP + H2O + 4 H(+)(in) = ADP + phosphate + 5 H(+)(out). Functionally, produces ATP from ADP in the presence of a proton gradient across the membrane. The catalytic sites are hosted primarily by the beta subunits. The protein is ATP synthase subunit beta of Shewanella baltica (strain OS223).